The chain runs to 566 residues: Mucin-21 (566 aa).

Positions 1-24 are cleaved as a signal peptide; the sequence is MKMQKGNVLLMFGLLLHLEAATNS. Asparagine 25 carries an N-linked (GlcNAc...) asparagine glycan. Positions 25–68 are disordered; the sequence is NETSTSANTGSSVISSGASTATNSGSSVTSSGVSTATISGSSVT. Topologically, residues 25 to 479 are extracellular; that stretch reads NETSTSANTG…KPGGSLVPWE (455 aa). A run of 28 repeats spans residues 31 to 44, 45 to 59, 60 to 74, 75 to 89, 90 to 104, 105 to 119, 120 to 134, 135 to 149, 150 to 164, 165 to 179, 180 to 194, 195 to 209, 210 to 224, 225 to 239, 244 to 254, 255 to 269, 270 to 284, 285 to 299, 300 to 314, 315 to 329, 330 to 344, 345 to 359, 360 to 374, 375 to 389, 390 to 404, 405 to 419, 420 to 434, and 435 to 449. The interval 31-435 is 28 X 15 AA approximate tandem repeats; sequence ANTGSSVISS…STTSSGANTA (405 aa). The segment at 106–456 is disordered; sequence TNSESSTTSS…SGTAALTGMH (351 aa). Residues 480–500 form a helical membrane-spanning segment; that stretch reads IFLITLVSVVAAVGLFAGLFF. The Cytoplasmic portion of the chain corresponds to 501 to 566; sequence CVRNSLSLRN…MEMSGRNSGP (66 aa). The interval 521–566 is cytoplasmic tail; sequence GLNHGLGPGPGGNHGAPHRPRWSPNWFWRRPVSSIAMEMSGRNSGP.

In terms of processing, O-glycosylated. As to expression, expressed in lung, large intestine, thymus, and testis. Expressed in normal and malignant bronchial epithelial cells.

The protein resides in the cell membrane. The sequence is that of Mucin-21 (MUC21) from Homo sapiens (Human).